Here is a 78-residue protein sequence, read N- to C-terminus: MAKPPVRKPKKKVCAFCKDKTQYVDYKDTNMLRKFISDRGKIRARRVTGNCTQHQRDVATAVKNSREMALLPYTSTAR.

The protein belongs to the bacterial ribosomal protein bS18 family. As to quaternary structure, part of the 30S ribosomal subunit. Forms a tight heterodimer with protein bS6.

In terms of biological role, binds as a heterodimer with protein bS6 to the central domain of the 16S rRNA, where it helps stabilize the platform of the 30S subunit. The sequence is that of Small ribosomal subunit protein bS18B from Streptomyces griseus subsp. griseus (strain JCM 4626 / CBS 651.72 / NBRC 13350 / KCC S-0626 / ISP 5235).